The following is a 1238-amino-acid chain: MANISSPFGQNEWLVEEMYRKFRDDPSSVDPSWHEFLVDYNPESTAEPVLTDPTSTDKQPSATPQAKPAAAADPVASRAKPATTPTVANGTAAGSAAAPAKTTTTPPIEGDELQVLRGAAAVVVKNMSASLDVPTATSVRAVPAKLMIDNRTVINNQLKRNRGGKISFTHLLGYALVQAVKKFPNINRHYAEIDGKPIAVTPAHTNLGLAIDLQGKDGKRSLVVAGIKRCEELRFAQFVTAYEDIVRRARDGKLTAEDFAGVTISLTNPGTIGTVHSVPRLMTGQGAIIGVGAMEYPAEFQGASAERIAELGIGKLITLTSTYDHRIIQGAESGDFLRTIHEMVLSDSFWDEIFRELSIPYLPVRWRTDNPDSIVDKNARVMELIAAYRNRGHLMADIDPLRLDNTRFRSHPDLDLLTHGLTLWDLDRVFKVNGFGGWKYKKLRDVLGLLRDAYCRHIGVEYTHILDPEQQEWLQQRVETKNVKPTVAEQKYILSKLNAAEAFETFLHTKYVGQKRFSLEGAESVIPMMDAAIDQCAKHGLDEVVIGMPHRGRLNVLANIVGKPYSQIFTEFEGNLNPTLAHSSGDVKYHLGATGLYLQMFGDNDIQVSLTANPSHLEAVDPVLEGLVRAKQDLLNKDTNGNQDEAFSVVPMMLHGDAAFAGQGVVAETLNLANLPGYRVGGTIHIIVNNQIGFTTAPEYSRSSEYCTDVAKMIGAPIFHVNGDDPEACVWVAKLAVDFRQRFKKDVVIDMLCYRRRGHNEGDDPSMTNPYMYDVVDTKRGARKSYTEALIGRGDISLKEAEDALRDYQGQLERVFNEVRDLEKHGVQPSESVESDQMIPAGLSTAVDKALLARIGDAFLAVPEGFTVHPRVQPVLEKRREMAYEGKIDWAFAELLALGSLVAEGKLVRLSGQDTKRGTFSQRHSVIIDRHTGEEFTPLQLLANNPDGSPTGGKFLVYNSPLSEYAAVGFEYGYTVGNPDAVVLWEAQFGDFVNGAQSIIDEFINSGEAKWGQLSTVVLLLPHGHEGQGPDHTSGRIERFLQLWAEGSMTFAVPSTPSNYFHLLRRHALDGIKRPLIVFTPKSMLRNKAAVSDIKDFTEIKFRSVLEEPTYEDSIDDRSKVTRVLLTCGKLYYELAARKIKDNRDDVAIVRIEQLAPLPRRRLGETLDRYENAKEFFWVQEEPANQGAWPRFGLELPELLPRLTGIKRISRRAMSAPSSGSSKVHAVEQQEILDTAFG.

The interval 1–41 (MANISSPFGQNEWLVEEMYRKFRDDPSSVDPSWHEFLVDYN) is 2-oxoglutarate dehydrogenase E1, N-terminal part. The tract at residues 42-97 (PESTAEPVLTDPTSTDKQPSATPQAKPAAAADPVASRAKPATTPTVANGTAAGSAA) is linker. Positions 44–108 (STAEPVLTDP…PAKTTTTPPI (65 aa)) are disordered. Residues 59-107 (QPSATPQAKPAAAADPVASRAKPATTPTVANGTAAGSAAAPAKTTTTPP) show a composition bias toward low complexity. A succinyltransferase E2 region spans residues 98 to 346 (APAKTTTTPP…LRTIHEMVLS (249 aa)). Histidine 325 (proton acceptor; for succinyltransferase activity) is an active-site residue. The 2-oxoglutarate dehydrogenase E1, C-terminal part stretch occupies residues 347 to 1238 (DSFWDEIFRE…QQEILDTAFG (892 aa)). Arginine 551 lines the thiamine diphosphate pocket. 2 residues coordinate 2-oxoglutarate: histidine 590 and serine 615. Residues serine 615, leucine 617, aspartate 657, alanine 658, alanine 659, and asparagine 690 each contribute to the thiamine diphosphate site. A Mg(2+)-binding site is contributed by aspartate 657. Asparagine 690 and isoleucine 692 together coordinate Mg(2+). Residues 795 to 825 (DISLKEAEDALRDYQGQLERVFNEVRDLEKH) are a coiled coil. A 2-oxoglutarate-binding site is contributed by histidine 1032. Residues threonine 1050, arginine 1066, lysine 1101, serine 1104, glutamine 1154, arginine 1161, and arginine 1162 each contribute to the acetyl-CoA site.

The protein belongs to the 2-oxoacid dehydrogenase family. Kgd subfamily. In terms of assembly, homodimer. The 2-oxoglutarate dehydrogenase (ODH) complex contains multiple copies of three enzymatic components: 2-oxoglutarate dehydrogenase (E1), dihydrolipoamide succinyltransferase (E2) and lipoamide dehydrogenase (E3). Mg(2+) serves as cofactor. Thiamine diphosphate is required as a cofactor.

It catalyses the reaction glyoxylate + 2-oxoglutarate + H(+) = 2-hydroxy-3-oxoadipate + CO2. It carries out the reaction 2-oxoglutarate + H(+) = succinate semialdehyde + CO2. The enzyme catalyses N(6)-[(R)-lipoyl]-L-lysyl-[protein] + 2-oxoglutarate + H(+) = N(6)-[(R)-S(8)-succinyldihydrolipoyl]-L-lysyl-[protein] + CO2. The catalysed reaction is N(6)-[(R)-dihydrolipoyl]-L-lysyl-[protein] + succinyl-CoA = N(6)-[(R)-S(8)-succinyldihydrolipoyl]-L-lysyl-[protein] + CoA. It participates in carbohydrate metabolism; tricarboxylic acid cycle; succinate from 2-oxoglutarate (transferase route): step 1/2. It functions in the pathway carbohydrate metabolism; tricarboxylic acid cycle; succinyl-CoA from 2-oxoglutarate (dehydrogenase route): step 1/1. Its activity is regulated as follows. Alpha-ketoglutarate dehydrogenase and decarboxylase activities are inhibited by unphosphorylated GarA, and allosterically activated by acetyl-CoA, the main substrate of the TCA cycle. Its function is as follows. Shows three enzymatic activities that share a first common step, the attack of thiamine-PP on 2-oxoglutarate (alpha-ketoglutarate, KG), leading to the formation of an enamine-thiamine-PP intermediate upon decarboxylation. Thus, displays KGD activity, catalyzing the decarboxylation from five-carbon 2-oxoglutarate to four-carbon succinate semialdehyde (SSA). Also catalyzes C-C bond formation between the activated aldehyde formed after decarboxylation of alpha-ketoglutarate and the carbonyl of glyoxylate (GLX), to yield 2-hydroxy-3-oxoadipate (HOA), which spontaneously decarboxylates to form 5-hydroxylevulinate (HLA). And is also a component of the 2-oxoglutarate dehydrogenase (ODH) complex, that catalyzes the overall conversion of 2-oxoglutarate to succinyl-CoA and CO(2). The KG decarboxylase and KG dehydrogenase reactions provide two alternative, tightly regulated, pathways connecting the oxidative and reductive branches of the TCA cycle. The protein is Multifunctional 2-oxoglutarate metabolism enzyme (kgd) of Mycobacterium leprae (strain TN).